Reading from the N-terminus, the 518-residue chain is ATPase expression protein 2, mitochondrial (518 aa).

Residues 1 to 15 constitute a mitochondrion transit peptide; it reads MLKKSRVLGKIPIPY.

It belongs to the AEP2 family. Binds to the 5'UTR of the OLI1 mRNA.

It localises to the mitochondrion. Functionally, required for translation of the mitochondrial OLI1 transcript coding for the mitochondrial ATP synthase subunit 9. The protein is ATPase expression protein 2, mitochondrial (AEP2) of Kluyveromyces lactis (strain ATCC 8585 / CBS 2359 / DSM 70799 / NBRC 1267 / NRRL Y-1140 / WM37) (Yeast).